The sequence spans 85 residues: Large ribosomal subunit protein bL27 (85 aa).

This sequence belongs to the bacterial ribosomal protein bL27 family.

The protein is Large ribosomal subunit protein bL27 of Mycobacteroides abscessus (strain ATCC 19977 / DSM 44196 / CCUG 20993 / CIP 104536 / JCM 13569 / NCTC 13031 / TMC 1543 / L948) (Mycobacterium abscessus).